We begin with the raw amino-acid sequence, 89 residues long: UPF0335 protein CCNA_03428 (89 aa).

The protein belongs to the UPF0335 family.

The sequence is that of UPF0335 protein CCNA_03428 from Caulobacter vibrioides (strain NA1000 / CB15N) (Caulobacter crescentus).